Here is a 128-residue protein sequence, read N- to C-terminus: Probable 4-amino-4-deoxy-L-arabinose-phosphoundecaprenol flippase subunit ArnF (128 aa).

At 1–2 the chain is on the cytoplasmic side; sequence MG. A helical transmembrane segment spans residues 3 to 23; that stretch reads LMWGLFSVIIASVAQLSLGFA. Over 24–35 the chain is Periplasmic; it reads ASHLPPMTHLWD. Residues 36–56 form a helical membrane-spanning segment; the sequence is FIATLLAFGLDARILLLGLLG. The Cytoplasmic segment spans residues 57–77; it reads YLLSVFCWYKTLHKLALSKAY. Residues 78–98 traverse the membrane as a helical segment; the sequence is ALLSMSYVLVWIASMVLPGWG. Residues 99–100 lie on the Periplasmic side of the membrane; it reads GT. A helical transmembrane segment spans residues 101–121; it reads FSLKALLGVACIMSGLMLIFL. Topologically, residues 122–128 are cytoplasmic; sequence PTTKQRY.

The protein belongs to the ArnF family. Heterodimer of ArnE and ArnF.

The protein resides in the cell inner membrane. It participates in bacterial outer membrane biogenesis; lipopolysaccharide biosynthesis. Its function is as follows. Translocates 4-amino-4-deoxy-L-arabinose-phosphoundecaprenol (alpha-L-Ara4N-phosphoundecaprenol) from the cytoplasmic to the periplasmic side of the inner membrane. The chain is Probable 4-amino-4-deoxy-L-arabinose-phosphoundecaprenol flippase subunit ArnF from Shigella dysenteriae serotype 1 (strain Sd197).